A 689-amino-acid polypeptide reads, in one-letter code: Glycine--tRNA ligase beta subunit (689 aa).

This sequence belongs to the class-II aminoacyl-tRNA synthetase family. As to quaternary structure, tetramer of two alpha and two beta subunits.

It localises to the cytoplasm. The catalysed reaction is tRNA(Gly) + glycine + ATP = glycyl-tRNA(Gly) + AMP + diphosphate. This Lacticaseibacillus paracasei (strain ATCC 334 / BCRC 17002 / CCUG 31169 / CIP 107868 / KCTC 3260 / NRRL B-441) (Lactobacillus paracasei) protein is Glycine--tRNA ligase beta subunit.